The sequence spans 88 residues: Arminin 7965 (88 aa).

The first 18 residues, Met1 to Ala18, serve as a signal peptide directing secretion. Positions Lys19–Ala57 are excised as a propeptide. An Alanine amide modification is found at Ala85.

Belongs to the arminin family. In terms of tissue distribution, expressed in entodermal epithelium along the body column.

It is found in the secreted. Its subcellular location is the target cell membrane. Its function is as follows. Antimicrobial peptide with a broad-spectrum antimicrobial activity. Keeps its antibacterial activity under a wide range of salt concentrations that mimic physiological conditions of human blood, which is surprising, since Hydra is an obligate freshwater animal with nearly no salt tolerance. Does not affect red blood cells. The chain is Arminin 7965 from Hydra vulgaris (Hydra).